Consider the following 99-residue polypeptide: Aspartyl/glutamyl-tRNA(Asn/Gln) amidotransferase subunit C (99 aa).

This sequence belongs to the GatC family. Heterotrimer of A, B and C subunits.

The catalysed reaction is L-glutamyl-tRNA(Gln) + L-glutamine + ATP + H2O = L-glutaminyl-tRNA(Gln) + L-glutamate + ADP + phosphate + H(+). The enzyme catalyses L-aspartyl-tRNA(Asn) + L-glutamine + ATP + H2O = L-asparaginyl-tRNA(Asn) + L-glutamate + ADP + phosphate + 2 H(+). Functionally, allows the formation of correctly charged Asn-tRNA(Asn) or Gln-tRNA(Gln) through the transamidation of misacylated Asp-tRNA(Asn) or Glu-tRNA(Gln) in organisms which lack either or both of asparaginyl-tRNA or glutaminyl-tRNA synthetases. The reaction takes place in the presence of glutamine and ATP through an activated phospho-Asp-tRNA(Asn) or phospho-Glu-tRNA(Gln). This chain is Aspartyl/glutamyl-tRNA(Asn/Gln) amidotransferase subunit C, found in Burkholderia ambifaria (strain MC40-6).